Consider the following 528-residue polypeptide: U6 snRNA (guanine-N(2))-methyltransferase THUMPD2 (528 aa).

A compositionally biased stretch (basic and acidic residues) spans 154 to 168 (QEVAKDHGESQEDKL). Disordered stretches follow at residues 154 to 200 (QEVA…ADAQ) and 437 to 460 (MKTL…RASS). The THUMP domain occupies 162–266 (ESQEDKLLQG…DAYSVVGIPL (105 aa)).

Belongs to the methyltransferase superfamily. As to quaternary structure, part of the heterodimeric THUMPD2-TRM112 methyltransferase complex; this complex forms an active tRNA methyltransferase, where TRMT112 acts as an activator of the catalytic subunit THUMPD2.

Its subcellular location is the nucleus. It catalyses the reaction guanosine in U6 snRNA + S-adenosyl-L-methionine = N(2)-methylguanosine in U6 snRNA + S-adenosyl-L-homocysteine + H(+). Its function is as follows. Catalytic subunit of the THUMPD2-TRM112 methyltransferase complex, that specifically mediates the S-adenosyl-L-methionine-dependent N(2)-methylation of guanosine nucleotides, most probably at position 72 (m2G72), in the U6snRNA of the major spliceosome. This modification in the U6 snRNA affects the constitutive splicing efficiency of introns that have suboptimal splice sites and can impact final mRNA levels. The polypeptide is U6 snRNA (guanine-N(2))-methyltransferase THUMPD2 (Mus musculus (Mouse)).